The sequence spans 312 residues: Pantothenate kinase (312 aa).

97 to 104 is an ATP binding site; that stretch reads GSVAVGKS.

Belongs to the prokaryotic pantothenate kinase family.

It is found in the cytoplasm. The enzyme catalyses (R)-pantothenate + ATP = (R)-4'-phosphopantothenate + ADP + H(+). Its pathway is cofactor biosynthesis; coenzyme A biosynthesis; CoA from (R)-pantothenate: step 1/5. In Mycolicibacterium smegmatis (strain ATCC 700084 / mc(2)155) (Mycobacterium smegmatis), this protein is Pantothenate kinase.